The primary structure comprises 429 residues: Isocitrate dehydrogenase [NADP] (429 aa).

NADP(+) is bound at residue threonine 108. Positions 117, 119, 123, 133, and 156 each coordinate D-threo-isocitrate. Residue aspartate 308 coordinates Mg(2+). NADP(+) contacts are provided by residues 340 to 346 (HGSAPKY), asparagine 353, tyrosine 393, and arginine 397.

The protein belongs to the isocitrate and isopropylmalate dehydrogenases family. Homodimer. Requires Mg(2+) as cofactor. The cofactor is Mn(2+).

The catalysed reaction is D-threo-isocitrate + NADP(+) = 2-oxoglutarate + CO2 + NADPH. Its function is as follows. Catalyzes the oxidative decarboxylation of isocitrate to 2-oxoglutarate and carbon dioxide with the concomitant reduction of NADP(+). This is Isocitrate dehydrogenase [NADP] (icd) from Caldococcus noboribetus.